The following is a 565-amino-acid chain: uncharacterized protein (565 aa).

The N-terminal stretch at 1–19 is a signal peptide; the sequence is MRWLATFVALLIAISSVSA. Over residues 494 to 504 the composition is skewed to polar residues; the sequence is TGAENVTNNSV. The interval 494-525 is disordered; sequence TGAENVTNNSVTATTPPAKASQQTPAPATPPV. Positions 505–519 are enriched in low complexity; sequence TATTPPAKASQQTPA.

This is an uncharacterized protein from Archaeoglobus fulgidus (strain ATCC 49558 / DSM 4304 / JCM 9628 / NBRC 100126 / VC-16).